The chain runs to 544 residues: Lariat debranching enzyme (544 aa).

A divalent metal cation is bound by residues C8, H10, D39, and N84. Positions 124–154 (SGIFKSHDYRKGHFECPPYNSSTIRSIYHVR) are lariat recognition loop. K128 is subject to N6-acetyllysine. A divalent metal cation-binding residues include H174, H226, and H228. A compositionally biased stretch (acidic residues) spans 395–412 (EYEEQDDVESNDSGEDQS). A disordered region spans residues 395–463 (EYEEQDDVES…PSDQASEFSA (69 aa)). Over residues 413 to 425 (EYNTDTSALSSIN) the composition is skewed to polar residues. A compositionally biased stretch (acidic residues) spans 429 to 439 (IMLDEEEDEDS). Residues 445-463 (SGMNTPSVEPSDQASEFSA) show a composition bias toward polar residues. Residues S464, S474, S478, S479, S485, S499, and S514 each carry the phosphoserine modification. Residues 476–544 (IVSSDDTVDS…AVDDDDDDAA (69 aa)) form a disordered region. The span at 512–522 (RLSDEHEPEQR) shows a compositional bias: basic and acidic residues.

Belongs to the lariat debranching enzyme family. Fe(2+) serves as cofactor. Zn(2+) is required as a cofactor. It depends on Mn(2+) as a cofactor. As to expression, ubiquitously expressed, strongest expression in the spinal cord and brainstem.

It is found in the nucleus. Its activity is regulated as follows. Active in presence of diverse metals including Fe(2+), Zn(2+), Mn(2+). Also activated by Ca(2+). Binds two metal cations in two adjacent alpha and beta metal-binding pockets. Functionally, cleaves the 2'-5' phosphodiester linkage at the branch point of excised lariat intron RNA and converts them into linear molecules that can be subsequently degraded, thereby facilitating ribonucleotide turnover. Linked to its role in pre-mRNA processing mechanism, may also participate in retrovirus replication via an RNA lariat intermediate in cDNA synthesis and have an antiviral cell-intrinsic defense function in the brainstem. This chain is Lariat debranching enzyme (DBR1), found in Homo sapiens (Human).